We begin with the raw amino-acid sequence, 188 residues long: GMP synthase [glutamine-hydrolyzing] subunit A (188 aa).

The 186-residue stretch at 3-188 (PLYVVNNYGQ…FSICTGQNKG (186 aa)) folds into the Glutamine amidotransferase type-1 domain. The Nucleophile role is filled by C75. Residues H162 and E164 contribute to the active site.

Heterodimer composed of a glutamine amidotransferase subunit (A) and a GMP-binding subunit (B).

It carries out the reaction XMP + L-glutamine + ATP + H2O = GMP + L-glutamate + AMP + diphosphate + 2 H(+). It functions in the pathway purine metabolism; GMP biosynthesis; GMP from XMP (L-Gln route): step 1/1. Its function is as follows. Catalyzes the synthesis of GMP from XMP. The protein is GMP synthase [glutamine-hydrolyzing] subunit A of Methanospirillum hungatei JF-1 (strain ATCC 27890 / DSM 864 / NBRC 100397 / JF-1).